The following is a 165-amino-acid chain: Lithostathine-1 (165 aa).

An N-terminal signal peptide occupies residues 1–21; it reads MARNAYFILLSCLIVLSPSQG. Glutamine 22 bears the Pyrrolidone carboxylic acid mark. In terms of domain architecture, C-type lectin spans 33 to 163; sequence ISCPEGSNAY…DAQYSFVCKF (131 aa). 3 cysteine pairs are disulfide-bonded: cysteine 35–cysteine 46, cysteine 63–cysteine 161, and cysteine 136–cysteine 153. N-linked (GlcNAc...) asparagine glycosylation occurs at asparagine 129.

Expressed only in regenerating islets and normal exocrine pancreas, but not in normal pancreatic islets. Expressed strongly in pancreas, moderately in gall bladder, and weakly in liver.

The protein localises to the secreted. In terms of biological role, might act as an inhibitor of spontaneous calcium carbonate precipitation. The protein is Lithostathine-1 (Reg1) of Mus musculus (Mouse).